We begin with the raw amino-acid sequence, 217 residues long: Large ribosomal subunit protein uL3 (217 aa).

This sequence belongs to the universal ribosomal protein uL3 family. Part of the 50S ribosomal subunit. Forms a cluster with proteins L14 and L19.

Its function is as follows. One of the primary rRNA binding proteins, it binds directly near the 3'-end of the 23S rRNA, where it nucleates assembly of the 50S subunit. The protein is Large ribosomal subunit protein uL3 of Mycobacterium ulcerans (strain Agy99).